The chain runs to 133 residues: Holo-[acyl-carrier-protein] synthase (133 aa).

Mg(2+) contacts are provided by D8 and E57.

It belongs to the P-Pant transferase superfamily. AcpS family. Mg(2+) is required as a cofactor.

The protein localises to the cytoplasm. It carries out the reaction apo-[ACP] + CoA = holo-[ACP] + adenosine 3',5'-bisphosphate + H(+). Its function is as follows. Transfers the 4'-phosphopantetheine moiety from coenzyme A to a Ser of acyl-carrier-protein. This is Holo-[acyl-carrier-protein] synthase from Parvibaculum lavamentivorans (strain DS-1 / DSM 13023 / NCIMB 13966).